A 159-amino-acid chain; its full sequence is 3-hydroxyacyl-[acyl-carrier-protein] dehydratase FabZ (159 aa).

The active site involves His58.

This sequence belongs to the thioester dehydratase family. FabZ subfamily.

Its subcellular location is the cytoplasm. It carries out the reaction a (3R)-hydroxyacyl-[ACP] = a (2E)-enoyl-[ACP] + H2O. Functionally, involved in unsaturated fatty acids biosynthesis. Catalyzes the dehydration of short chain beta-hydroxyacyl-ACPs and long chain saturated and unsaturated beta-hydroxyacyl-ACPs. This is 3-hydroxyacyl-[acyl-carrier-protein] dehydratase FabZ from Helicobacter pylori (strain G27).